Reading from the N-terminus, the 86-residue chain is Small nuclear ribonucleoprotein F (86 aa).

Residue Ser2 is modified to N-acetylserine. Positions 6–78 (NPKPFLNGLT…VLYIRGVEEE (73 aa)) constitute a Sm domain.

Belongs to the snRNP Sm proteins family. SmF/LSm6 subfamily. Core component of the spliceosomal U1, U2, U4 and U5 small nuclear ribonucleoproteins (snRNPs), the building blocks of the spliceosome. Most spliceosomal snRNPs contain a common set of Sm proteins, SNRPB, SNRPD1, SNRPD2, SNRPD3, SNRPE, SNRPF and SNRPG that assemble in a heptameric protein ring on the Sm site of the small nuclear RNA to form the core snRNP. Component of the U1 snRNP. The U1 snRNP is composed of the U1 snRNA and the 7 core Sm proteins SNRPB, SNRPD1, SNRPD2, SNRPD3, SNRPE, SNRPF and SNRPG, and at least three U1 snRNP-specific proteins SNRNP70/U1-70K, SNRPA/U1-A and SNRPC/U1-C. Component of the U4/U6-U5 tri-snRNP complex composed of the U4, U6 and U5 snRNAs and at least PRPF3, PRPF4, PRPF6, PRPF8, PRPF31, SNRNP200, TXNL4A, SNRNP40, SNRPB, SNRPD1, SNRPD2, SNRPD3, SNRPE, SNRPF, SNRPG, DDX23, CD2BP2, PPIH, SNU13, EFTUD2, SART1 and USP39, plus LSM2, LSM3, LSM4, LSM5, LSM6, LSM7 and LSM8. Component of the U7 snRNP complex, or U7 Sm protein core complex, that is composed of the U7 snRNA and at least LSM10, LSM11, SNRPB, SNRPD3, SNRPE, SNRPF and SNRPG; the complex does not contain SNRPD1 and SNRPD2. Component of the minor spliceosome, which splices U12-type introns. Part of the SMN-Sm complex that contains SMN1, GEMIN2/SIP1, DDX20/GEMIN3, GEMIN4, GEMIN5, GEMIN6, GEMIN7, GEMIN8, STRAP/UNRIP and the Sm proteins SNRPB, SNRPD1, SNRPD2, SNRPD3, SNRPE, SNRPF and SNRPG; catalyzes core snRNPs assembly. Forms a 6S pICln-Sm complex composed of CLNS1A/pICln, SNRPD1, SNRPD2, SNRPE, SNRPF and SNRPG; ring-like structure where CLNS1A/pICln mimics additional Sm proteins and which is unable to assemble into the core snRNP. Interacts with GEMIN2 (via N-terminus); the interaction is direct. Interacts with SNRPD2; the interaction is direct. Interacts with SNRPE; the interaction is direct.

It localises to the cytoplasm. The protein localises to the cytosol. It is found in the nucleus. Functionally, plays a role in pre-mRNA splicing as a core component of the spliceosomal U1, U2, U4 and U5 small nuclear ribonucleoproteins (snRNPs), the building blocks of the spliceosome. Component of both the pre-catalytic spliceosome B complex and activated spliceosome C complexes. As a component of the minor spliceosome, involved in the splicing of U12-type introns in pre-mRNAs. As part of the U7 snRNP it is involved in histone 3'-end processing. The polypeptide is Small nuclear ribonucleoprotein F (SNRPF) (Homo sapiens (Human)).